Here is a 165-residue protein sequence, read N- to C-terminus: Small ribosomal subunit protein eS10 (165 aa).

Tyr12 is subject to Phosphotyrosine. A disordered region spans residues 92 to 165; it reads ATLRRSRPET…FGRGRGQPPQ (74 aa). A compositionally biased stretch (basic and acidic residues) spans 97–128; it reads SRPETGRPRPKGLEGERPARLTRGEADRDTYR. Glycyl lysine isopeptide (Lys-Gly) (interchain with G-Cter in ubiquitin) cross-links involve residues Lys138 and Lys139. Ser146 bears the Phosphoserine mark. Residue Arg153 is modified to Omega-N-methylarginine. Residues 154 to 165 are compositionally biased toward gly residues; that stretch reads GGFGRGRGQPPQ. Residues Arg158 and Arg160 each carry the symmetric dimethylarginine modification.

Belongs to the eukaryotic ribosomal protein eS10 family. In terms of assembly, component of the small ribosomal subunit. The methylated form interacts with NPM1. In terms of processing, methylated by PRMT5. Methylation is necessary for its interaction with NPS1, its localization in the granular component (GC) region of the nucleolus, for the proper assembly of ribosomes, protein synthesis and optimal cell proliferation. Monoubiquitinated by ZNF598 when a ribosome has stalled during translation of poly(A) sequences, leading to preclude synthesis of a long poly-lysine tail and initiate the ribosome quality control (RQC) pathway to degrade the potentially detrimental aberrant nascent polypeptide. Deubiquitinated by OTUD3 and USP21, antagonizing ZNF598 activity. Deubiquitinated by OTUD1, antagonizing ZNF598 activity and stimulating formation of polysomes: deubiquitination by OTUD1 promotes stability and translation of a subset mRNAs with a high abundance of rare codons can limit the translation rate. Deubiquitinated by USP10.

It is found in the cytoplasm. The protein resides in the nucleus. It localises to the nucleolus. Functionally, component of the 40S ribosomal subunit. The ribosome is a large ribonucleoprotein complex responsible for the synthesis of proteins in the cell. This is Small ribosomal subunit protein eS10 (RPS10) from Oryctolagus cuniculus (Rabbit).